The primary structure comprises 132 residues: Large ribosomal subunit protein bL12 (132 aa).

Residues 100 to 126 (ESTPKPVKEGASKEDAEAAKKELEEAG) show a composition bias toward basic and acidic residues. Positions 100 to 132 (ESTPKPVKEGASKEDAEAAKKELEEAGAKVSIK) are disordered.

Belongs to the bacterial ribosomal protein bL12 family. As to quaternary structure, homodimer. Part of the ribosomal stalk of the 50S ribosomal subunit. Forms a multimeric L10(L12)X complex, where L10 forms an elongated spine to which 2 to 4 L12 dimers bind in a sequential fashion. Binds GTP-bound translation factors.

Its function is as follows. Forms part of the ribosomal stalk which helps the ribosome interact with GTP-bound translation factors. Is thus essential for accurate translation. The chain is Large ribosomal subunit protein bL12 from Thermosynechococcus vestitus (strain NIES-2133 / IAM M-273 / BP-1).